A 216-amino-acid chain; its full sequence is Thiopurine S-methyltransferase (216 aa).

4 residues coordinate S-adenosyl-L-methionine: tryptophan 10, leucine 45, glutamate 66, and arginine 123.

Belongs to the class I-like SAM-binding methyltransferase superfamily. TPMT family.

The protein localises to the cytoplasm. The catalysed reaction is S-adenosyl-L-methionine + a thiopurine = S-adenosyl-L-homocysteine + a thiopurine S-methylether.. This Pseudomonas entomophila (strain L48) protein is Thiopurine S-methyltransferase.